The primary structure comprises 253 residues: Imidazole glycerol phosphate synthase subunit HisF (253 aa).

Residues Asp11 and Asp130 contribute to the active site.

The protein belongs to the HisA/HisF family. In terms of assembly, heterodimer of HisH and HisF.

The protein localises to the cytoplasm. The catalysed reaction is 5-[(5-phospho-1-deoxy-D-ribulos-1-ylimino)methylamino]-1-(5-phospho-beta-D-ribosyl)imidazole-4-carboxamide + L-glutamine = D-erythro-1-(imidazol-4-yl)glycerol 3-phosphate + 5-amino-1-(5-phospho-beta-D-ribosyl)imidazole-4-carboxamide + L-glutamate + H(+). It functions in the pathway amino-acid biosynthesis; L-histidine biosynthesis; L-histidine from 5-phospho-alpha-D-ribose 1-diphosphate: step 5/9. Functionally, IGPS catalyzes the conversion of PRFAR and glutamine to IGP, AICAR and glutamate. The HisF subunit catalyzes the cyclization activity that produces IGP and AICAR from PRFAR using the ammonia provided by the HisH subunit. This Clostridium botulinum (strain 657 / Type Ba4) protein is Imidazole glycerol phosphate synthase subunit HisF.